The following is a 901-amino-acid chain: Protein translocase subunit SecA (901 aa).

Residues glutamine 87, 105-109 (GEGKT), and aspartate 512 contribute to the ATP site. A disordered region spans residues 859 to 901 (HQDDDSAAAAALAAQTGERKVGRNDPCPCGSGKKYKQCHGRLQ). Zn(2+) contacts are provided by cysteine 885, cysteine 887, cysteine 896, and histidine 897. Residues 891-901 (KKYKQCHGRLQ) are compositionally biased toward basic residues.

The protein belongs to the SecA family. As to quaternary structure, monomer and homodimer. Part of the essential Sec protein translocation apparatus which comprises SecA, SecYEG and auxiliary proteins SecDF-YajC and YidC. It depends on Zn(2+) as a cofactor.

It is found in the cell inner membrane. It localises to the cytoplasm. The catalysed reaction is ATP + H2O + cellular proteinSide 1 = ADP + phosphate + cellular proteinSide 2.. In terms of biological role, part of the Sec protein translocase complex. Interacts with the SecYEG preprotein conducting channel. Has a central role in coupling the hydrolysis of ATP to the transfer of proteins into and across the cell membrane, serving both as a receptor for the preprotein-SecB complex and as an ATP-driven molecular motor driving the stepwise translocation of polypeptide chains across the membrane. The protein is Protein translocase subunit SecA of Escherichia coli O139:H28 (strain E24377A / ETEC).